A 43-amino-acid chain; its full sequence is Potassium channel toxin gamma-KTx 4.4 (43 aa).

4 cysteine pairs are disulfide-bonded: cysteine 5–cysteine 23, cysteine 11–cysteine 34, cysteine 20–cysteine 39, and cysteine 24–cysteine 41.

The protein belongs to the ergtoxin family. Gamma-KTx 4 subfamily. In terms of tissue distribution, expressed by the venom gland.

The protein localises to the secreted. Its function is as follows. Reversibly blocks Kv11/ERG potassium channels. In Centruroides exilicauda (Bark scorpion), this protein is Potassium channel toxin gamma-KTx 4.4.